The primary structure comprises 306 residues: Golgi to ER traffic protein 2 (306 aa).

The span at 1–18 shows a compositional bias: basic and acidic residues; that stretch reads MSEISDAEKRRILREKRQ. Positions 1–100 are disordered; that stretch reads MSEISDAEKR…PPGSAEQQNG (100 aa). The Cytoplasmic portion of the chain corresponds to 1-172; that stretch reads MSEISDAEKR…VEAHNIAVNK (172 aa). Residues 34 to 57 are compositionally biased toward polar residues; it reads TGQTENSFLSTESPLDSRESTYPA. Over residues 68–77 the composition is skewed to basic and acidic residues; that stretch reads DSTKQMDELL. The span at 78–90 shows a compositional bias: low complexity; that stretch reads AKATSKTTSKASS. Residues 91 to 100 show a composition bias toward polar residues; sequence PPGSAEQQNG. A helical membrane pass occupies residues 173–193; sequence LKSYTILVKWLFFLLPYLYYI. At 194-214 the chain is on the lumenal side; that stretch reads THSARDPFQHNAVNYVLDRSN. A helical transmembrane segment spans residues 215–234; sequence FFTVFTTFEIVALSVYYQLL. The Cytoplasmic portion of the chain corresponds to 235–281; sequence MSAEKSHNVNTLDNNSKILKLVSMVPPGLVPIPNLRGKVAQALQYWD. The helical transmembrane segment at 282–302 threads the bilayer; that stretch reads VVSMYLTDLCFAIVLAGLFQY. The Lumenal segment spans residues 303-306; that stretch reads YHSM.

The protein belongs to the GET2 family. In terms of assembly, component of the Golgi to ER traffic (GET) complex, which is composed of GET1, GET2 and GET3. Within the complex, GET1 and GET2 form a heterotetramer which is stabilized by phosphatidylinositol binding and which binds to the GET3 homodimer.

Its subcellular location is the endoplasmic reticulum membrane. The protein localises to the golgi apparatus membrane. Required for the post-translational delivery of tail-anchored (TA) proteins to the endoplasmic reticulum. Together with GET1, acts as a membrane receptor for soluble GET3, which recognizes and selectively binds the transmembrane domain of TA proteins in the cytosol. The GET complex cooperates with the HDEL receptor ERD2 to mediate the ATP-dependent retrieval of resident ER proteins that contain a C-terminal H-D-E-L retention signal from the Golgi to the ER. The protein is Golgi to ER traffic protein 2 of Lachancea thermotolerans (strain ATCC 56472 / CBS 6340 / NRRL Y-8284) (Yeast).